The primary structure comprises 193 residues: Molybdopterin synthase catalytic subunit (193 aa).

Residues 118–119 (HR), Lys134, and 141–143 (KKE) each bind substrate. The disordered stretch occupies residues 159–193 (DRTTTDGTTASSPAPATRPAKGGGCCGRKVRVNES). Positions 163 to 178 (TDGTTASSPAPATRPA) are enriched in low complexity.

This sequence belongs to the MoaE family. MOCS2B subfamily. Heterotetramer; composed of 2 small (MOCS2A) and 2 large (MOCS2B) subunits.

The protein resides in the cytoplasm. The catalysed reaction is 2 [molybdopterin-synthase sulfur-carrier protein]-C-terminal-Gly-aminoethanethioate + cyclic pyranopterin phosphate + H2O = molybdopterin + 2 [molybdopterin-synthase sulfur-carrier protein]-C-terminal Gly-Gly + 2 H(+). The protein operates within cofactor biosynthesis; molybdopterin biosynthesis. Functionally, catalytic subunit of the molybdopterin synthase complex, a complex that catalyzes the conversion of precursor Z into molybdopterin. Acts by mediating the incorporation of 2 sulfur atoms from thiocarboxylated MOCS2A into precursor Z to generate a dithiolene group. This is Molybdopterin synthase catalytic subunit from Oryza sativa subsp. japonica (Rice).